The primary structure comprises 403 residues: S-adenosylmethionine synthase (403 aa).

His-17 provides a ligand contact to ATP. Asp-19 is a binding site for Mg(2+). Glu-45 lines the K(+) pocket. Residues Glu-58 and Gln-104 each coordinate L-methionine. Positions 104–114 are flexible loop; the sequence is QSSDIAQGVNT. Residues 179–181, 250–251, Asp-259, 265–266, Ala-282, and Lys-286 contribute to the ATP site; these read DGK, KF, and RK. Residue Asp-259 participates in L-methionine binding. Lys-290 contributes to the L-methionine binding site.

This sequence belongs to the AdoMet synthase family. Homotetramer; dimer of dimers. It depends on Mg(2+) as a cofactor. The cofactor is K(+).

The protein resides in the cytoplasm. It catalyses the reaction L-methionine + ATP + H2O = S-adenosyl-L-methionine + phosphate + diphosphate. It participates in amino-acid biosynthesis; S-adenosyl-L-methionine biosynthesis; S-adenosyl-L-methionine from L-methionine: step 1/1. Functionally, catalyzes the formation of S-adenosylmethionine (AdoMet) from methionine and ATP. The overall synthetic reaction is composed of two sequential steps, AdoMet formation and the subsequent tripolyphosphate hydrolysis which occurs prior to release of AdoMet from the enzyme. The sequence is that of S-adenosylmethionine synthase from Mycobacterium leprae (strain Br4923).